Consider the following 697-residue polypeptide: MLNPIVHRFQYGKHIVILETGIVARQATAAVMVNMADTIVLVTVVGVKQVKPGQKFFPLMVNYQERTYAAGRFPGGFFRREGRPSEGEILISRMIDRPLRPLFPDGFLNEVQVIATVVSINPQVSPDIVAMIGVSAALSISGIPFNCPFGAARVGYINNQYVLNPTIAELVDSSLDLVVASTANAVLMVESEAKQLSEEQMLSAIIFGHEQQQLVIQNINHMVTIVGKPKWSWQAQVIDTNLQLCVTELAESRLNEAFCISDKQERDVCIETIKSDVLSALQQKNETIEEETISNIFANLEKQIARNRILGGKLRIDGRNHKMIRSLDMRTSILPRTHGSALFVRGETQALVTVTLGTERNAQNIDELIGERTDRFLLHYNFPPYCVGEIGLVGSPKRREIGHGRLAKRGILAVMPTANEFPYTVRVVSEITESNGSSSMASVCGTSLALMDAGVPIKAAVAGVAMGLIKEDNNFVILSDILSNEDYIGDMDFKVAGSKNGITALQMDIKTKGITNNIIQLALNQAKDARMHILNMMEQVISMSRTDISPFAPRIHTIKIHPDKIKDVIGKCGSVIRALTEETKTIIDIEDDGTVTVAATDSIKAQQAICRIKDITAEIEVGSIYHGKVTRIVDFGAFIAISSNKEGLVHISQITNKRVEKVADYLSIDQIVLVKVLEVDRQGRIRLSMKDTNLTNK.

2 residues coordinate Mg(2+): D486 and D492. In terms of domain architecture, KH spans 553-612 (PRIHTIKIHPDKIKDVIGKCGSVIRALTEETKTIIDIEDDGTVTVAATDSIKAQQAICRI). The S1 motif domain occupies 622-690 (GSIYHGKVTR…RQGRIRLSMK (69 aa)).

It belongs to the polyribonucleotide nucleotidyltransferase family. In terms of assembly, component of the RNA degradosome, which is a multiprotein complex involved in RNA processing and mRNA degradation. Mg(2+) serves as cofactor.

It localises to the cytoplasm. It carries out the reaction RNA(n+1) + phosphate = RNA(n) + a ribonucleoside 5'-diphosphate. Involved in mRNA degradation. Catalyzes the phosphorolysis of single-stranded polyribonucleotides processively in the 3'- to 5'-direction. This is Polyribonucleotide nucleotidyltransferase from Baumannia cicadellinicola subsp. Homalodisca coagulata.